A 276-amino-acid chain; its full sequence is Large ribosomal subunit protein uL2 (276 aa).

Disordered stretches follow at residues 1–20 (MGIKKYNPTTNGRRNMTTND) and 219–276 (TVRG…RRKK). Positions 7 to 20 (NPTTNGRRNMTTND) are enriched in polar residues.

This sequence belongs to the universal ribosomal protein uL2 family. In terms of assembly, part of the 50S ribosomal subunit. Forms a bridge to the 30S subunit in the 70S ribosome.

Functionally, one of the primary rRNA binding proteins. Required for association of the 30S and 50S subunits to form the 70S ribosome, for tRNA binding and peptide bond formation. It has been suggested to have peptidyltransferase activity; this is somewhat controversial. Makes several contacts with the 16S rRNA in the 70S ribosome. This chain is Large ribosomal subunit protein uL2, found in Bacillus mycoides (strain KBAB4) (Bacillus weihenstephanensis).